Here is a 291-residue protein sequence, read N- to C-terminus: Pyridoxal 5'-phosphate synthase subunit PdxS (291 aa).

Residue Asp-23 participates in D-ribose 5-phosphate binding. The active-site Schiff-base intermediate with D-ribose 5-phosphate is the Lys-80. Gly-152 provides a ligand contact to D-ribose 5-phosphate. Arg-164 is a D-glyceraldehyde 3-phosphate binding site. D-ribose 5-phosphate contacts are provided by residues Gly-213 and 234-235 (GS).

The protein belongs to the PdxS/SNZ family. In terms of assembly, in the presence of PdxT, forms a dodecamer of heterodimers.

The catalysed reaction is aldehydo-D-ribose 5-phosphate + D-glyceraldehyde 3-phosphate + L-glutamine = pyridoxal 5'-phosphate + L-glutamate + phosphate + 3 H2O + H(+). It participates in cofactor biosynthesis; pyridoxal 5'-phosphate biosynthesis. Catalyzes the formation of pyridoxal 5'-phosphate from ribose 5-phosphate (RBP), glyceraldehyde 3-phosphate (G3P) and ammonia. The ammonia is provided by the PdxT subunit. Can also use ribulose 5-phosphate and dihydroxyacetone phosphate as substrates, resulting from enzyme-catalyzed isomerization of RBP and G3P, respectively. The polypeptide is Pyridoxal 5'-phosphate synthase subunit PdxS (Streptococcus pneumoniae (strain P1031)).